We begin with the raw amino-acid sequence, 153 residues long: Insulin-like growth factor 1.S (153 aa).

Cystine bridges form between Cys-29-Cys-38, Cys-54-Cys-96, Cys-66-Cys-109, and Cys-100-Cys-109. The tract at residues 49-77 (GPETLCGAELVDTLQFVCGDRGFYFSKPT) is b. The tract at residues 78 to 89 (GYGSNNRRSHHR) is c. Residues 90-110 (GIVDECCFQSCDFRRLEMYCA) are a. The d stretch occupies residues 111–118 (PAKQAKSA). Positions 119-153 (RSVRTQRHTDMPKAQKEVHPKNTSRGNTGSRGFRM) are cleaved as a propeptide — e peptide. A disordered region spans residues 119-153 (RSVRTQRHTDMPKAQKEVHPKNTSRGNTGSRGFRM). A compositionally biased stretch (basic and acidic residues) spans 125 to 138 (RHTDMPKAQKEVHP). The segment covering 139–153 (KNTSRGNTGSRGFRM) has biased composition (polar residues).

The protein belongs to the insulin family. As to expression, expressed in adult liver, lung, heart, kidney and peritoneal fat.

It is found in the secreted. The insulin-like growth factors, isolated from plasma, are structurally and functionally related to insulin but have a much higher growth-promoting activity. Promotes head development by inhibiting Wnt signaling during embryogenesis. Acts as a ligand for IGF1R. Binds to the alpha subunit of IGF1R, leading to the activation of the intrinsic tyrosine kinase activity which autophosphorylates tyrosine residues in the beta subunit thus initiatiating a cascade of down-stream signaling events leading to activation of the PI3K-AKT/PKB and the Ras-MAPK pathways. Binds to integrins. Its binding to integrins and subsequent ternary complex formation with integrins and IGFR1 are essential for IGF1 signaling. This Xenopus laevis (African clawed frog) protein is Insulin-like growth factor 1.S.